The sequence spans 65 residues: Large ribosomal subunit protein bL28 (65 aa).

Positions 1–21 are disordered; sequence MPGRDQLTGQKALSGNKRSHA.

It belongs to the bacterial ribosomal protein bL28 family.

The protein is Large ribosomal subunit protein bL28 of Metamycoplasma arthritidis (strain 158L3-1) (Mycoplasma arthritidis).